A 318-amino-acid chain; its full sequence is uncharacterized protein (318 aa).

Over residues 1–22 (MKASQERSEARRTAHSVKEKKY) the composition is skewed to basic and acidic residues. 2 disordered regions span residues 1–29 (MKAS…ASPR) and 293–318 (DDGD…DDDE).

This is an uncharacterized protein from Ictalurid herpesvirus 1 (strain Auburn) (IcHV-1).